The sequence spans 389 residues: Chitin-binding protein CbpD (389 aa).

Positions 1-25 are cleaved as a signal peptide; sequence MKHYSATLALLPLTLALFLPQAAHA. Residues 26-208 enclose the Chitin-binding type-4 domain; that stretch reads HGSMETPPSR…EAFYACIDVS (183 aa).

Post-translationally, can be detected in the extracellular supernatant as a 43 kDa protein and a 23 kDa protein, both proteins have the same N-terminus. Only the larger protein binds chitin, which may protect it from further processing and/or degradation by elastase (lasB). It is not clear whether the short form is functional or a degradation product.

Its subcellular location is the secreted. Functionally, binds chitin but does not hydrolyze it, has no detectable protease or staphylolytic activity. This chain is Chitin-binding protein CbpD, found in Pseudomonas aeruginosa (strain ATCC 15692 / DSM 22644 / CIP 104116 / JCM 14847 / LMG 12228 / 1C / PRS 101 / PAO1).